The primary structure comprises 898 residues: MFKYNRSLCSSALIAKSQIRFYRLKRAPLNYASHIPEVLNKTIIGPDEPEKCLILKGKTSEEIENNLLSNKKFQEINPLDTIQETFIQYLKFCNETNFKRSNKNLNRLKKTLESKDSNSTVKINAVFNYLLEECDLEIKRLNTTGQTQVYNEEKGNEDDLEQSIMNDIFRSAQEQFEDQEGHIPLRSTSFLLEILKSFNERFNGIIKPKESITEMVTFSQLAQAFEVVKLIPVQEMKEKGIYLVGNLLYGTGKVRLDPINESFYIESLLVFGNYKAAYSLFITNKDKVNERWWNELGLMITLRSNHLRNFRKLLAETDAKYSTKYSYLSPRVTKLSIRKYLSIGNVTEANILTDRFIKLVEEVGIIRMKDEQEELPTGVKNFQNEKHATEFLNELEIPSDHDYISIVDFHLYKRNIPMAAQLISKYMEIPGTTQEDAAFLLVKTKLNMLKDFEKLRNIFAQNKDYVVPENNVKMLQEAFESVITKYNTNSPIYNELLFENVSALTKSIVLTDFLEEFITKQASGQWMELNSVSRSRKFNGLLNILLGTGEEEKAYNILKKLEEASKKSKTDPDLLYNQFYSEVNAYHYAKFVEFYSLQIQNMKAQNTPSFRKKEFKQKVKSLLKRMQESEVIPNAVFLREILNFYDSMYDFNSSFEIINPLLESKQQVSSESSLSTSNPCRFYNRRIITKPLYHKIWSVYCHYYHVLQNNSRILSKKSSIVKKLIKRQIKIHPTCHPRVLFQMTAENGEILPDKTFSKLIVSTFMKSGDLEAIPAILTFLTKKFDLNIDYDLSMYILKGLKRQYLRDISNISKDACEYKLRKAELMNNESILKNIPQGTNQENTISHLIREILIFIKWKEKSDCSTFLMVEDAFKELGTEFTLLEELIEDVNKLKIKA.

The transit peptide at 1–31 (MFKYNRSLCSSALIAKSQIRFYRLKRAPLNY) directs the protein to the mitochondrion.

The protein localises to the mitochondrion. The chain is Protein SOV1, mitochondrial (SOV1) from Saccharomyces cerevisiae (strain ATCC 204508 / S288c) (Baker's yeast).